We begin with the raw amino-acid sequence, 460 residues long: L-seryl-tRNA(Sec) selenium transferase (460 aa).

Lysine 293 is subject to N6-(pyridoxal phosphate)lysine.

Belongs to the SelA family. Pyridoxal 5'-phosphate is required as a cofactor.

It localises to the cytoplasm. It carries out the reaction L-seryl-tRNA(Sec) + selenophosphate + H(+) = L-selenocysteinyl-tRNA(Sec) + phosphate. The protein operates within aminoacyl-tRNA biosynthesis; selenocysteinyl-tRNA(Sec) biosynthesis; selenocysteinyl-tRNA(Sec) from L-seryl-tRNA(Sec) (bacterial route): step 1/1. In terms of biological role, converts seryl-tRNA(Sec) to selenocysteinyl-tRNA(Sec) required for selenoprotein biosynthesis. The protein is L-seryl-tRNA(Sec) selenium transferase of Pasteurella multocida (strain Pm70).